The chain runs to 699 residues: Polyribonucleotide nucleotidyltransferase (699 aa).

Mg(2+) is bound by residues Asp485 and Asp491. The KH domain occupies 552 to 611 (PRITTIKINPEKIRDVIGKGGAVIRALTEETGTTIELEDDGTVKIASSNGEATKEAIRRI). The S1 motif domain maps to 621-689 (GRIYNGKVIR…RQGRVRLSIK (69 aa)).

It belongs to the polyribonucleotide nucleotidyltransferase family. As to quaternary structure, component of the RNA degradosome, which is a multiprotein complex involved in RNA processing and mRNA degradation. Mg(2+) is required as a cofactor.

The protein resides in the cytoplasm. The catalysed reaction is RNA(n+1) + phosphate = RNA(n) + a ribonucleoside 5'-diphosphate. Its function is as follows. Involved in mRNA degradation. Catalyzes the phosphorolysis of single-stranded polyribonucleotides processively in the 3'- to 5'-direction. The chain is Polyribonucleotide nucleotidyltransferase from Shewanella sp. (strain MR-4).